The primary structure comprises 64 residues: Makatoxin-1 (64 aa).

Residues 2 to 64 (RDAYIADSEN…VPIRISGSCR (63 aa)) form the LCN-type CS-alpha/beta domain. Intrachain disulfides connect cysteine 12-cysteine 63, cysteine 16-cysteine 36, cysteine 22-cysteine 46, and cysteine 26-cysteine 48.

In terms of tissue distribution, expressed by the venom gland.

The protein localises to the secreted. Its function is as follows. This protein markedly relaxes the rat carbachol-precontracted anococcygeus muscle. This relaxation is inhibited by the inhibitor of nitric oxide (NO) synthase, N-nitro-L-arginine methyl ester (L-NAME), suggesting that the response induced by this protein is NO-mediated. This chain is Makatoxin-1, found in Olivierus martensii (Manchurian scorpion).